The chain runs to 273 residues: Ribosomal RNA small subunit methyltransferase A (273 aa).

The S-adenosyl-L-methionine site is built by Asn18, Leu20, Gly45, Glu66, Asp91, and Asn113.

This sequence belongs to the class I-like SAM-binding methyltransferase superfamily. rRNA adenine N(6)-methyltransferase family. RsmA subfamily.

The protein localises to the cytoplasm. The catalysed reaction is adenosine(1518)/adenosine(1519) in 16S rRNA + 4 S-adenosyl-L-methionine = N(6)-dimethyladenosine(1518)/N(6)-dimethyladenosine(1519) in 16S rRNA + 4 S-adenosyl-L-homocysteine + 4 H(+). In terms of biological role, specifically dimethylates two adjacent adenosines (A1518 and A1519) in the loop of a conserved hairpin near the 3'-end of 16S rRNA in the 30S particle. May play a critical role in biogenesis of 30S subunits. The sequence is that of Ribosomal RNA small subunit methyltransferase A from Shigella dysenteriae serotype 1 (strain Sd197).